Consider the following 513-residue polypeptide: MEMAKEQELILVLDFGSQYNQLITRRIREMGVYSELHDHEISIEEIKRMNPKGIILSGGPNSVYEEGSFTIDPEIYNLGIPVLGICYGMQLTTKLLGGKVERANEREYGKATINAKSDELFFGLPSEQTVWMSHSDKVIEIPEGFEVIADSPSTNYAAIEDKKRRIYGVQFHPEVRHTEYGNDLLRNFVRRVCNCTGEWTMENFIEIEIEKIRQQVGNRKVLCAMSGGVDSSVVAVLLHKAIGEQLTCIFVDHGLLRKGEGDMVMEQFGEGFDMNIIRVNAQERFMSKLKGVSDPERKRKIIGNEFVYVFDDEAAKLTDVDFLAQGTLYTDVIESGTKTAQTIKSHHNVGGLPEDMEFELIEPINTLFKDEVRALGIELGIPEHLVWRQPFPGPGLGIRVLGEITEDKLEIVRESDAILREVIREEGLERDIWQYFTVLPGIQSVGVMGDYRTYDHTVGIRAVTSIDGMTSDFARIDWEVLQKISSRIVNEVDHVNRVVYDITSKPPSTIEWE.

The 190-residue stretch at 9–198 folds into the Glutamine amidotransferase type-1 domain; sequence LILVLDFGSQ…VRRVCNCTGE (190 aa). Residue C86 is the Nucleophile of the active site. Residues H172 and E174 contribute to the active site. Residues 199-388 enclose the GMPS ATP-PPase domain; it reads WTMENFIEIE…LGIPEHLVWR (190 aa). 226 to 232 is a binding site for ATP; it reads SGGVDSS.

As to quaternary structure, homodimer.

The catalysed reaction is XMP + L-glutamine + ATP + H2O = GMP + L-glutamate + AMP + diphosphate + 2 H(+). It participates in purine metabolism; GMP biosynthesis; GMP from XMP (L-Gln route): step 1/1. Catalyzes the synthesis of GMP from XMP. This chain is GMP synthase [glutamine-hydrolyzing], found in Staphylococcus epidermidis (strain ATCC 12228 / FDA PCI 1200).